A 219-amino-acid polypeptide reads, in one-letter code: Deoxyribose-phosphate aldolase (219 aa).

Asp92 (proton donor/acceptor) is an active-site residue. Lys154 (schiff-base intermediate with acetaldehyde) is an active-site residue. Lys183 acts as the Proton donor/acceptor in catalysis.

It belongs to the DeoC/FbaB aldolase family. DeoC type 1 subfamily.

The protein resides in the cytoplasm. It carries out the reaction 2-deoxy-D-ribose 5-phosphate = D-glyceraldehyde 3-phosphate + acetaldehyde. Its pathway is carbohydrate degradation; 2-deoxy-D-ribose 1-phosphate degradation; D-glyceraldehyde 3-phosphate and acetaldehyde from 2-deoxy-alpha-D-ribose 1-phosphate: step 2/2. Functionally, catalyzes a reversible aldol reaction between acetaldehyde and D-glyceraldehyde 3-phosphate to generate 2-deoxy-D-ribose 5-phosphate. In Dictyoglomus turgidum (strain DSM 6724 / Z-1310), this protein is Deoxyribose-phosphate aldolase.